The following is a 946-amino-acid chain: Bifunctional glutamine synthetase adenylyltransferase/adenylyl-removing enzyme (946 aa).

The adenylyl removase stretch occupies residues 1-440; it reads MKPLSSPLQQ…VFNELIGDDE (440 aa). The segment at 449 to 946 is adenylyl transferase; that stretch reads SEQWRELWQD…ASWQKWLVEE (498 aa).

This sequence belongs to the GlnE family. Mg(2+) is required as a cofactor.

The enzyme catalyses [glutamine synthetase]-O(4)-(5'-adenylyl)-L-tyrosine + phosphate = [glutamine synthetase]-L-tyrosine + ADP. It catalyses the reaction [glutamine synthetase]-L-tyrosine + ATP = [glutamine synthetase]-O(4)-(5'-adenylyl)-L-tyrosine + diphosphate. In terms of biological role, involved in the regulation of glutamine synthetase GlnA, a key enzyme in the process to assimilate ammonia. When cellular nitrogen levels are high, the C-terminal adenylyl transferase (AT) inactivates GlnA by covalent transfer of an adenylyl group from ATP to specific tyrosine residue of GlnA, thus reducing its activity. Conversely, when nitrogen levels are low, the N-terminal adenylyl removase (AR) activates GlnA by removing the adenylyl group by phosphorolysis, increasing its activity. The regulatory region of GlnE binds the signal transduction protein PII (GlnB) which indicates the nitrogen status of the cell. The polypeptide is Bifunctional glutamine synthetase adenylyltransferase/adenylyl-removing enzyme (Shigella dysenteriae serotype 1 (strain Sd197)).